Consider the following 428-residue polypeptide: Elongation factor 1-alpha (428 aa).

One can recognise a tr-type G domain in the interval 5-217 (KPHVNIVFIG…DQIPEPEKPT (213 aa)). The tract at residues 14-21 (GHVDHGKS) is G1. 14 to 21 (GHVDHGKS) provides a ligand contact to GTP. S21 is a Mg(2+) binding site. The interval 68–72 (GITID) is G2. The interval 89–92 (DAPG) is G3. GTP contacts are provided by residues 89-93 (DAPGH) and 144-147 (NKMD). A G4 region spans residues 144-147 (NKMD). Positions 181-183 (SAW) are G5.

Belongs to the TRAFAC class translation factor GTPase superfamily. Classic translation factor GTPase family. EF-Tu/EF-1A subfamily.

It is found in the cytoplasm. It carries out the reaction GTP + H2O = GDP + phosphate + H(+). GTP hydrolase that promotes the GTP-dependent binding of aminoacyl-tRNA to the A-site of ribosomes during protein biosynthesis. This is Elongation factor 1-alpha from Thermococcus sibiricus (strain DSM 12597 / MM 739).